The following is a 73-amino-acid chain: Large ribosomal subunit protein eL20 (73 aa).

It belongs to the eukaryotic ribosomal protein eL20 family. Part of the 50S ribosomal subunit. Binds 23S rRNA.

This Methanococcus aeolicus (strain ATCC BAA-1280 / DSM 17508 / OCM 812 / Nankai-3) protein is Large ribosomal subunit protein eL20.